Consider the following 197-residue polypeptide: FMN-dependent NADH:quinone oxidoreductase (197 aa).

S10 is an FMN binding site.

It belongs to the azoreductase type 1 family. Homodimer. Requires FMN as cofactor.

The catalysed reaction is 2 a quinone + NADH + H(+) = 2 a 1,4-benzosemiquinone + NAD(+). It carries out the reaction N,N-dimethyl-1,4-phenylenediamine + anthranilate + 2 NAD(+) = 2-(4-dimethylaminophenyl)diazenylbenzoate + 2 NADH + 2 H(+). Functionally, quinone reductase that provides resistance to thiol-specific stress caused by electrophilic quinones. In terms of biological role, also exhibits azoreductase activity. Catalyzes the reductive cleavage of the azo bond in aromatic azo compounds to the corresponding amines. The sequence is that of FMN-dependent NADH:quinone oxidoreductase from Mycoplasma genitalium (strain ATCC 33530 / DSM 19775 / NCTC 10195 / G37) (Mycoplasmoides genitalium).